The following is a 237-amino-acid chain: MKLGVFELTDCGGCALNLLFLYDKLLDLLEFYEIAEFHMATSKKSREKIDVALVTGTVSTQRDLEVLRDARNRSEYLIALGTCATHGSVQGVIENSKEAYRRVYGNGKPPVKLLNPKPVTDYVPVDFAIPGCPYDKEEVFQVLIDIAKGIEPVAKDYPVCLECKLNEYECVLLKKRIPCLGPVTAGGCNAKCPSYGLGCIGCRGPSLDNNVPGMFEVLKEILPDEEIARKLRTFARW.

Residues Cys-11, Cys-14, Cys-83, Cys-132, Cys-160, Cys-163, Cys-170, and Cys-179 each coordinate [4Fe-4S] cluster. [3Fe-4S] cluster-binding residues include Cys-188, Cys-192, Cys-199, and Cys-202.

The protein belongs to the [NiFe]/[NiFeSe] hydrogenase small subunit family. In terms of assembly, dimer of heterotetramer of alpha, beta, gamma and delta subunits. The nickel-containing alpha and delta subunits constitute the hydrogenase activity. The beta and gamma subunits (flavin-containing dimer) constitute the sulfur reductase activity. Ni(2+) is required as a cofactor. [4Fe-4S] cluster serves as cofactor. It depends on [3Fe-4S] cluster as a cofactor.

It is found in the cytoplasm. It catalyses the reaction H2 + NADP(+) = NADPH + H(+). The catalysed reaction is H2 + NAD(+) = NADH + H(+). Functionally, part of a bifunctional enzyme complex that functions as a hydrogen-evolving hydrogenase with sulfur-reducing activity. May play a role in hydrogen cycling during fermentative growth. Activity exhibited with NAD in addition to NADPH. The alpha and delta subunits form the hydrogenase component that catalyzes the reduction of protons to evolve hydrogen. The sequence is that of Sulfhydrogenase 2 subunit delta from Pyrococcus furiosus (strain ATCC 43587 / DSM 3638 / JCM 8422 / Vc1).